A 421-amino-acid polypeptide reads, in one-letter code: 3-isopropylmalate dehydratase large subunit (421 aa).

3 residues coordinate [4Fe-4S] cluster: Cys-302, Cys-362, and Cys-365.

It belongs to the aconitase/IPM isomerase family. LeuC type 2 subfamily. In terms of assembly, heterodimer of LeuC and LeuD. [4Fe-4S] cluster is required as a cofactor.

It catalyses the reaction (2R,3S)-3-isopropylmalate = (2S)-2-isopropylmalate. The protein operates within amino-acid biosynthesis; L-leucine biosynthesis; L-leucine from 3-methyl-2-oxobutanoate: step 2/4. Catalyzes the isomerization between 2-isopropylmalate and 3-isopropylmalate, via the formation of 2-isopropylmaleate. The chain is 3-isopropylmalate dehydratase large subunit from Nitratiruptor sp. (strain SB155-2).